Here is a 276-residue protein sequence, read N- to C-terminus: Small ribosomal subunit protein uS3 (276 aa).

The KH type-2 domain maps to 38-106 (IRRMMTKGME…QVQLNILEVK (69 aa)). The span at 216–228 (NAAARAGNRPARG) shows a compositional bias: low complexity. The tract at residues 216 to 276 (NAAARAGNRP…PAAESTGTEA (61 aa)) is disordered. Over residues 229 to 245 (GADRPAGRGGRGGERGG) the composition is skewed to basic and acidic residues. Over residues 254 to 269 (PAAEAPKADAAAAPAA) the composition is skewed to low complexity.

Belongs to the universal ribosomal protein uS3 family. In terms of assembly, part of the 30S ribosomal subunit. Forms a tight complex with proteins S10 and S14.

In terms of biological role, binds the lower part of the 30S subunit head. Binds mRNA in the 70S ribosome, positioning it for translation. In Streptomyces griseus subsp. griseus (strain JCM 4626 / CBS 651.72 / NBRC 13350 / KCC S-0626 / ISP 5235), this protein is Small ribosomal subunit protein uS3.